A 375-amino-acid chain; its full sequence is Alcohol dehydrogenase E chain (375 aa).

Serine 2 carries the post-translational modification N-acetylserine. 8 residues coordinate Zn(2+): cysteine 47, serine 49, histidine 68, cysteine 98, cysteine 101, cysteine 104, cysteine 112, and cysteine 175. An alcohol is bound by residues serine 49 and histidine 68. Serine 49 serves as a coordination point for NAD(+). NAD(+)-binding positions include glycine 200 to glycine 205, aspartate 224, lysine 229, valine 293, valine 293 to valine 295, phenylalanine 320, and arginine 370.

Belongs to the zinc-containing alcohol dehydrogenase family. Class-I subfamily. As to quaternary structure, dimer of identical or non-identical chains of two types (E and S) coded by 2 separate genes at different loci. Zn(2+) is required as a cofactor.

The protein resides in the cytoplasm. The catalysed reaction is a primary alcohol + NAD(+) = an aldehyde + NADH + H(+). The enzyme catalyses a secondary alcohol + NAD(+) = a ketone + NADH + H(+). This chain is Alcohol dehydrogenase E chain, found in Equus caballus (Horse).